Reading from the N-terminus, the 324-residue chain is tRNA U34 carboxymethyltransferase (324 aa).

Carboxy-S-adenosyl-L-methionine-binding positions include K91, W105, K110, G130, 152 to 154 (DPS), 181 to 182 (IE), M196, Y200, and R315.

Belongs to the class I-like SAM-binding methyltransferase superfamily. CmoB family. As to quaternary structure, homotetramer.

It carries out the reaction carboxy-S-adenosyl-L-methionine + 5-hydroxyuridine(34) in tRNA = 5-carboxymethoxyuridine(34) in tRNA + S-adenosyl-L-homocysteine + H(+). Catalyzes carboxymethyl transfer from carboxy-S-adenosyl-L-methionine (Cx-SAM) to 5-hydroxyuridine (ho5U) to form 5-carboxymethoxyuridine (cmo5U) at position 34 in tRNAs. The polypeptide is tRNA U34 carboxymethyltransferase (Aliivibrio fischeri (strain MJ11) (Vibrio fischeri)).